We begin with the raw amino-acid sequence, 357 residues long: Prostaglandin D2 receptor-like (357 aa).

Topologically, residues 1–20 (MNESYRCQAATWVERGSSAT) are extracellular. N-linked (GlcNAc...) asparagine glycosylation is present at asparagine 2. The helical transmembrane segment at 21 to 41 (MGGVLFSAGLLGNLLALVLLA) threads the bilayer. Topologically, residues 42–57 (RSGLGSCRPGPLHPPP) are cytoplasmic. The chain crosses the membrane as a helical span at residues 58-78 (SVFYVLVCGLTVTHLLGKCLI). At 79–106 (SPMVLAAYAQNRSLKELLPASGNQLCEA) the chain is on the extracellular side. Asparagine 89 is a glycosylation site (N-linked (GlcNAc...) asparagine). A disulfide bridge links cysteine 104 with cysteine 182. A helical membrane pass occupies residues 107–127 (FAFLMSFFGLASTLQLLAMAL). The Cytoplasmic portion of the chain corresponds to 128-149 (ECWLSLGHPFFYQRHITARRGV). The helical transmembrane segment at 150–170 (LVAPVAGAFSLAFCALPFAGF) threads the bilayer. Residues 171 to 194 (GKFVQYCPGTWCFIQMIHKKRSFS) are Extracellular-facing. The chain crosses the membrane as a helical span at residues 195 to 215 (VIGFSVLYSSLMALLVLATVV). Residues 216–261 (CNLGAMSNLYAMHRRQRHHPRRCSRDRAQSGSDYRHGSPNPLEELD) are Cytoplasmic-facing. The helical transmembrane segment at 262–282 (HFVLLALTTVLFTMCSLPLIY) threads the bilayer. The Extracellular portion of the chain corresponds to 283–306 (RAYYGAFKLVDRADGDSEDLQALR). A helical transmembrane segment spans residues 307 to 327 (FLSVISIVDPWIFIIFRTSVF). The Cytoplasmic portion of the chain corresponds to 328–357 (RMLFHKAFTRPLIYRNWCSHSWQTNMESTL).

This sequence belongs to the G-protein coupled receptor 1 family. Strongly expressed in eye and gastrointestinal tract (GIT), moderately in the brain and oviduct and weakly in the epididymis. In the eye, expressed in the epithelium of the iris and ciliary body and in photoreceptor cells of the retina. In the brain, expressed in leptomeninges, choroid plexus and spinal cord (sensory and motor neurons of the dorsal and ventral horns). In the stomach, expressed in the mucous-secreting goblet cells and the columnar epithelium. Expressed in platelets.

The protein resides in the cell membrane. Functionally, receptor for prostaglandin D2 (PGD2). The activity of this receptor is mainly mediated by G(s) proteins that stimulate adenylate cyclase, resulting in an elevation of intracellular cAMP. A mobilization of calcium is also observed, but without formation of inositol 1,4,5-trisphosphate. This chain is Prostaglandin D2 receptor-like (Ptgdrl), found in Rattus norvegicus (Rat).